Here is a 309-residue protein sequence, read N- to C-terminus: Methionyl-tRNA formyltransferase (309 aa).

A (6S)-5,6,7,8-tetrahydrofolate-binding site is contributed by 107 to 110 (SLLP).

This sequence belongs to the Fmt family.

It catalyses the reaction L-methionyl-tRNA(fMet) + (6R)-10-formyltetrahydrofolate = N-formyl-L-methionyl-tRNA(fMet) + (6S)-5,6,7,8-tetrahydrofolate + H(+). Attaches a formyl group to the free amino group of methionyl-tRNA(fMet). The formyl group appears to play a dual role in the initiator identity of N-formylmethionyl-tRNA by promoting its recognition by IF2 and preventing the misappropriation of this tRNA by the elongation apparatus. This chain is Methionyl-tRNA formyltransferase, found in Borrelia recurrentis (strain A1).